Consider the following 199-residue polypeptide: Protein GrpE (199 aa).

Positions 1–40 (MEKKKHGTNSISEALKVKAAVEQETATPEPTPQSETESAD) are disordered. Over residues 24–36 (ETATPEPTPQSET) the composition is skewed to polar residues.

This sequence belongs to the GrpE family. Homodimer.

It localises to the cytoplasm. Participates actively in the response to hyperosmotic and heat shock by preventing the aggregation of stress-denatured proteins, in association with DnaK and GrpE. It is the nucleotide exchange factor for DnaK and may function as a thermosensor. Unfolded proteins bind initially to DnaJ; upon interaction with the DnaJ-bound protein, DnaK hydrolyzes its bound ATP, resulting in the formation of a stable complex. GrpE releases ADP from DnaK; ATP binding to DnaK triggers the release of the substrate protein, thus completing the reaction cycle. Several rounds of ATP-dependent interactions between DnaJ, DnaK and GrpE are required for fully efficient folding. In Geotalea uraniireducens (strain Rf4) (Geobacter uraniireducens), this protein is Protein GrpE.